Reading from the N-terminus, the 203-residue chain is Small ribosomal subunit protein uS4 (203 aa).

The S4 RNA-binding domain occupies 93–153; the sequence is QRLDSVVYRL…EKSKNILPIQ (61 aa).

This sequence belongs to the universal ribosomal protein uS4 family. Part of the 30S ribosomal subunit. Contacts protein S5. The interaction surface between S4 and S5 is involved in control of translational fidelity.

One of the primary rRNA binding proteins, it binds directly to 16S rRNA where it nucleates assembly of the body of the 30S subunit. Functionally, with S5 and S12 plays an important role in translational accuracy. The sequence is that of Small ribosomal subunit protein uS4 from Leuconostoc mesenteroides subsp. mesenteroides (strain ATCC 8293 / DSM 20343 / BCRC 11652 / CCM 1803 / JCM 6124 / NCDO 523 / NBRC 100496 / NCIMB 8023 / NCTC 12954 / NRRL B-1118 / 37Y).